A 435-amino-acid chain; its full sequence is 5-hydroxybenzimidazole synthase (435 aa).

Residues methionine 95, tyrosine 124, histidine 163, serine 186–glycine 188, asparagine 227–arginine 230, and glutamate 266 each bind substrate. Histidine 270 is a Zn(2+) binding site. Tyrosine 293 is a substrate binding site. Histidine 334 provides a ligand contact to Zn(2+). [4Fe-4S] cluster-binding residues include cysteine 410, cysteine 413, and cysteine 417.

Belongs to the ThiC family. 5-hydroxybenzimidazole synthase subfamily. Homodimer. [4Fe-4S] cluster serves as cofactor.

It catalyses the reaction 5-amino-1-(5-phospho-beta-D-ribosyl)imidazole + AH2 + S-adenosyl-L-methionine = 5-hydroxybenzimidazole + 5'-deoxyadenosine + formate + L-methionine + A + NH4(+) + phosphate + 2 H(+). The protein operates within cofactor biosynthesis; adenosylcobalamin biosynthesis. Its function is as follows. Catalyzes the complex conversion of aminoimidazole ribotide (AIR) to 5-hydroxybenzimidazole (5-HBI) in a radical S-adenosyl-L-methionine (SAM)-dependent reaction. Is thus involved in the anaerobic biosynthesis of dimethylbenzimidazole (DMB), the lower axial ligand of vitamin B12 (cobalamin). The chain is 5-hydroxybenzimidazole synthase from Desulfuromonas acetoxidans (strain DSM 684 / 11070).